Reading from the N-terminus, the 137-residue chain is Small ribosomal subunit protein uS12 (137 aa).

The interval 1-57 (MPTINQLVRKPRRAQVTKSKSPAMNVGYNSRKKVQTKLASPQKRGVATRVGTMTPKK) is disordered. Asp102 carries the 3-methylthioaspartic acid modification.

Belongs to the universal ribosomal protein uS12 family. In terms of assembly, part of the 30S ribosomal subunit. Contacts proteins S8 and S17. May interact with IF1 in the 30S initiation complex.

In terms of biological role, with S4 and S5 plays an important role in translational accuracy. Its function is as follows. Interacts with and stabilizes bases of the 16S rRNA that are involved in tRNA selection in the A site and with the mRNA backbone. Located at the interface of the 30S and 50S subunits, it traverses the body of the 30S subunit contacting proteins on the other side and probably holding the rRNA structure together. The combined cluster of proteins S8, S12 and S17 appears to hold together the shoulder and platform of the 30S subunit. The chain is Small ribosomal subunit protein uS12 from Lactococcus lactis subsp. lactis (strain IL1403) (Streptococcus lactis).